A 305-amino-acid chain; its full sequence is tRNA dimethylallyltransferase (305 aa).

Residue 15-22 coordinates ATP; sequence GPTASGKS. 17–22 is a substrate binding site; that stretch reads TASGKS. Interaction with substrate tRNA regions lie at residues 40–43 and 164–168; these read DSMQ and QRIVR.

This sequence belongs to the IPP transferase family. Monomer. Mg(2+) serves as cofactor.

The catalysed reaction is adenosine(37) in tRNA + dimethylallyl diphosphate = N(6)-dimethylallyladenosine(37) in tRNA + diphosphate. Its function is as follows. Catalyzes the transfer of a dimethylallyl group onto the adenine at position 37 in tRNAs that read codons beginning with uridine, leading to the formation of N6-(dimethylallyl)adenosine (i(6)A). The protein is tRNA dimethylallyltransferase of Sinorhizobium medicae (strain WSM419) (Ensifer medicae).